We begin with the raw amino-acid sequence, 534 residues long: NEDD8-activating enzyme E1 regulatory subunit (534 aa).

Position 2 is an N-acetylalanine (alanine 2). 2 positions are modified to N6-acetyllysine: lysine 6 and lysine 341. An interaction with UBA3 region spans residues 331-344; sequence DMIADSGKYIKLQN.

Belongs to the ubiquitin-activating E1 family. ULA1 subfamily. Heterodimer of UBA3 and NAE1. The complex binds NEDD8 and UBE2M. Binds APP and TP53BP2. Post-translationally, ubiquitinated by TRIP12, leading to its degradation by the proteasome. As to expression, ubiquitous in fetal tissues. Expressed throughout the adult brain.

The protein resides in the cell membrane. It functions in the pathway protein modification; protein neddylation. With respect to regulation, binding of TP53BP2 to the regulatory subunit NAE1 decreases neddylation activity. Functionally, regulatory subunit of the dimeric UBA3-NAE1 E1 enzyme. E1 activates NEDD8 by first adenylating its C-terminal glycine residue with ATP, thereafter linking this residue to the side chain of the catalytic cysteine, yielding a NEDD8-UBA3 thioester and free AMP. E1 finally transfers NEDD8 to the catalytic cysteine of UBE2M. Necessary for cell cycle progression through the S-M checkpoint. Overexpression of NAE1 causes apoptosis through deregulation of NEDD8 conjugation. The covalent attachment of NEDD8 to target proteins is known as 'neddylation' and the process is involved in the regulation of cell growth, viability and development. This chain is NEDD8-activating enzyme E1 regulatory subunit (NAE1), found in Homo sapiens (Human).